An 862-amino-acid polypeptide reads, in one-letter code: Mismatch repair endonuclease PMS2 (862 aa).

N45, D70, E109, A110, and L111 together coordinate ATP. 4 stretches are compositionally biased toward basic and acidic residues: residues 391-401, 408-444, 484-495, and 528-552; these read DLEKPMVEKQD, TGEE…EPRR, PTDRAEVEKDSG, and GSQE…VDCH. The tract at residues 391 to 552 is disordered; it reads DLEKPMVEKQ…DDSFSDVDCH (162 aa). T573 is subject to Phosphothreonine. A Nuclear localization signal motif is present at residues 577-580; that stretch reads KRFK. T597 is subject to Phosphothreonine.

This sequence belongs to the DNA mismatch repair MutL/HexB family. Heterodimer of PMS2 and MLH1 (MutL alpha); this interaction is required for the stability of both partners. Forms a ternary complex with MutS alpha (MSH2-MSH6) or MutS beta (MSH2-MSH3). Part of the BRCA1-associated genome surveillance complex (BASC), which contains BRCA1, MSH2, MSH6, MLH1, ATM, BLM, PMS2 and the RAD50-MRE11-NBS1 protein complex. This association could be a dynamic process changing throughout the cell cycle and within subnuclear domains. Interacts with MTMR15/FAN1.

The protein resides in the nucleus. It carries out the reaction ATP + H2O = ADP + phosphate + H(+). In terms of biological role, component of the post-replicative DNA mismatch repair system (MMR). Heterodimerizes with MLH1 to form MutL alpha. DNA repair is initiated by MutS alpha (MSH2-MSH6) or MutS beta (MSH2-MSH3) binding to a dsDNA mismatch, then MutL alpha is recruited to the heteroduplex. Assembly of the MutL-MutS-heteroduplex ternary complex in presence of RFC and PCNA is sufficient to activate endonuclease activity of PMS2. It introduces single-strand breaks near the mismatch and thus generates new entry points for the exonuclease EXO1 to degrade the strand containing the mismatch. DNA methylation would prevent cleavage and therefore assure that only the newly mutated DNA strand is going to be corrected. MutL alpha (MLH1-PMS2) interacts physically with the clamp loader subunits of DNA polymerase III, suggesting that it may play a role to recruit the DNA polymerase III to the site of the MMR. Also implicated in DNA damage signaling, a process which induces cell cycle arrest and can lead to apoptosis in case of major DNA damages. Possesses an ATPase activity, but in the absence of gross structural changes, ATP hydrolysis may not be necessary for proficient mismatch repair. The protein is Mismatch repair endonuclease PMS2 of Homo sapiens (Human).